The primary structure comprises 556 residues: 2-succinyl-5-enolpyruvyl-6-hydroxy-3-cyclohexene-1-carboxylate synthase (556 aa).

The protein belongs to the TPP enzyme family. MenD subfamily. As to quaternary structure, homodimer. The cofactor is Mg(2+). It depends on Mn(2+) as a cofactor. Thiamine diphosphate serves as cofactor.

It catalyses the reaction isochorismate + 2-oxoglutarate + H(+) = 5-enolpyruvoyl-6-hydroxy-2-succinyl-cyclohex-3-ene-1-carboxylate + CO2. The protein operates within quinol/quinone metabolism; 1,4-dihydroxy-2-naphthoate biosynthesis; 1,4-dihydroxy-2-naphthoate from chorismate: step 2/7. Its pathway is quinol/quinone metabolism; menaquinone biosynthesis. In terms of biological role, catalyzes the thiamine diphosphate-dependent decarboxylation of 2-oxoglutarate and the subsequent addition of the resulting succinic semialdehyde-thiamine pyrophosphate anion to isochorismate to yield 2-succinyl-5-enolpyruvyl-6-hydroxy-3-cyclohexene-1-carboxylate (SEPHCHC). The protein is 2-succinyl-5-enolpyruvyl-6-hydroxy-3-cyclohexene-1-carboxylate synthase of Salmonella agona (strain SL483).